A 348-amino-acid chain; its full sequence is MTTIHNQSRKLLLQALRQGASDIHLSGTREDGIIQFRLNGRLAPFQRIPLQTAERLVSHFKFSAGLDIGERRKPQSGAMDLILEQKIPVSLRVSTLPTPLFEAVAIRLHPQQTPFALESIPLIKRQAQQLISLMTRTQGLILLTGATGSGKTTTLYAMLQKALHMQNLHIVTIEDPIEQLNPAFTQFEMNEKAQLTYEVGLKAALRHDPDVIMIGEIRDQTTAVYAVRAALTGHLVLATIHSANARGTITRLCEMGVALHDLREVVVAIIAQELISRKCPLCLSSDCSPYCTWLNNRKRAAIFDILEGKALQEALTANDSSFDGLGKERRFAIALGYIEEKEAKNRAL.

145–152 is an ATP binding site; sequence GATGSGKT.

The protein belongs to the GSP E family.

The protein localises to the cell membrane. Required for uptake of DNA by competent cells. This is Competence protein ComGA (comGA) from Halalkalibacterium halodurans (strain ATCC BAA-125 / DSM 18197 / FERM 7344 / JCM 9153 / C-125) (Bacillus halodurans).